The sequence spans 471 residues: Trimethyllysine dioxygenase (471 aa).

Positions 251 and 253 each coordinate Fe cation. Residues 272–302 (KAAPSRPPPPPPPPPPPSEEKEAAGSAAGEA) form a disordered region. Pro residues predominate over residues 276 to 288 (SRPPPPPPPPPPP). His-430 contributes to the Fe cation binding site.

Belongs to the gamma-BBH/TMLD family. Requires Fe(2+) as cofactor. The cofactor is L-ascorbate.

It localises to the cytoplasm. It carries out the reaction N(6),N(6),N(6)-trimethyl-L-lysine + 2-oxoglutarate + O2 = (3S)-3-hydroxy-N(6),N(6),N(6)-trimethyl-L-lysine + succinate + CO2. The protein operates within amine and polyamine biosynthesis; carnitine biosynthesis. Converts trimethyllysine (TML) into hydroxytrimethyllysine (HTML). The chain is Trimethyllysine dioxygenase (cbs-1) from Neurospora crassa (strain ATCC 24698 / 74-OR23-1A / CBS 708.71 / DSM 1257 / FGSC 987).